Consider the following 241-residue polypeptide: Probable transcriptional regulatory protein lmo1535 (241 aa).

The segment covering 1-14 (MSGHSKWNNIQGRK) has biased composition (polar residues). The segment at 1 to 22 (MSGHSKWNNIQGRKNAQDSKRS) is disordered.

Belongs to the TACO1 family.

It is found in the cytoplasm. The protein is Probable transcriptional regulatory protein lmo1535 of Listeria monocytogenes serovar 1/2a (strain ATCC BAA-679 / EGD-e).